A 644-amino-acid polypeptide reads, in one-letter code: Probable lysophospholipase 2 (644 aa).

An N-terminal signal peptide occupies residues 1–19 (MYFQSFYFLALLLATAVYG). Residues asparagine 44, asparagine 96, asparagine 141, asparagine 178, asparagine 221, asparagine 245, asparagine 253, asparagine 281, asparagine 286, asparagine 316, asparagine 319, asparagine 373, asparagine 393, asparagine 449, asparagine 501, asparagine 558, asparagine 579, and asparagine 596 are each glycosylated (N-linked (GlcNAc...) asparagine). A PLA2c domain is found at 53–600 (SCDSSEIMVN…SQYCWNGTVD (548 aa)).

The protein belongs to the lysophospholipase family.

It is found in the secreted. The catalysed reaction is a 1-acyl-sn-glycero-3-phosphocholine + H2O = sn-glycerol 3-phosphocholine + a fatty acid + H(+). Functionally, catalyzes the release of fatty acids from lysophospholipids. The chain is Probable lysophospholipase 2 (plb2) from Schizosaccharomyces pombe (strain 972 / ATCC 24843) (Fission yeast).